The primary structure comprises 222 residues: Probable mitochondrial import inner membrane translocase subunit Tim17 3 (222 aa).

3 helical membrane-spanning segments follow: residues 16-36 (CGCA…LKGF), 60-80 (SIAG…CALV), and 115-135 (ALVG…VATI).

The protein belongs to the Tim17/Tim22/Tim23 family. As to quaternary structure, component of the TIM23 complex at least composed of Tim23, Tim17 (Tim17a1, Tim17a2 or Tim17b1) and a Tim50. The complex interacts with the Tim44 component of the PAM complex.

It localises to the mitochondrion inner membrane. In terms of biological role, essential component of the TIM23 complex, a complex that mediates the translocation of transit peptide-containing proteins across the mitochondrial inner membrane. The chain is Probable mitochondrial import inner membrane translocase subunit Tim17 3 (Tim17a1) from Drosophila melanogaster (Fruit fly).